The following is a 162-amino-acid chain: MSFNKDEFVAFVNAIAMPIEMKNKIQSYIESLLNELENVKKSKNDLRISLQTSMNDANVLYHRQNNELKQKLNEITDELNEYKYENKKLQKENTSIQQIYVAKFYELNNMNKMYKKMLDLQTQMNELKSKKDIFEEQFMILENEHPTFLEKNQPIISEEEDD.

This is an uncharacterized protein from Sputnik virophage.